The primary structure comprises 272 residues: Regulatory protein RecX (272 aa).

It belongs to the RecX family.

Its subcellular location is the cytoplasm. Modulates RecA activity. This chain is Regulatory protein RecX, found in Oceanobacillus iheyensis (strain DSM 14371 / CIP 107618 / JCM 11309 / KCTC 3954 / HTE831).